Here is a 238-residue protein sequence, read N- to C-terminus: ATP synthase subunit a (238 aa).

A run of 5 helical transmembrane segments spans residues 15 to 35, 76 to 96, 111 to 131, 167 to 187, and 208 to 230; these read IFNL…FVFI, YSLF…LGLM, PTAN…LTHI, LALR…LLLL, and AFSV…VYLG.

This sequence belongs to the ATPase A chain family. F-type ATPases have 2 components, CF(1) - the catalytic core - and CF(0) - the membrane proton channel. CF(1) has five subunits: alpha(3), beta(3), gamma(1), delta(1), epsilon(1). CF(0) has three main subunits: a(1), b(2) and c(9-12). The alpha and beta chains form an alternating ring which encloses part of the gamma chain. CF(1) is attached to CF(0) by a central stalk formed by the gamma and epsilon chains, while a peripheral stalk is formed by the delta and b chains.

It is found in the cell membrane. Functionally, key component of the proton channel; it plays a direct role in the translocation of protons across the membrane. In Streptococcus pneumoniae serotype 19F (strain G54), this protein is ATP synthase subunit a.